A 198-amino-acid chain; its full sequence is Recombination protein RecR (198 aa).

The C4-type zinc-finger motif lies at 56–71; sequence CTTCGNIDTHDPCAIC. The Toprim domain occupies 79-174; the sequence is RSLCVVEEVS…RLTQLAHGLP (96 aa).

It belongs to the RecR family.

In terms of biological role, may play a role in DNA repair. It seems to be involved in an RecBC-independent recombinational process of DNA repair. It may act with RecF and RecO. This Sphingopyxis alaskensis (strain DSM 13593 / LMG 18877 / RB2256) (Sphingomonas alaskensis) protein is Recombination protein RecR.